Reading from the N-terminus, the 337-residue chain is Cytoskeleton protein RodZ (337 aa).

The Cytoplasmic segment spans residues 1–111 (MNTEATHDQN…LGKRRKKRDG (111 aa)). In terms of domain architecture, HTH cro/C1-type spans 19–71 (LRNAREQLGLSQQAVAERLCLKVSTVRDIEEDKAPADLASTFLRGYIRSYARL). Positions 30 to 49 (QQAVAERLCLKVSTVRDIEE) form a DNA-binding region, H-T-H motif. The helical; Signal-anchor for type II membrane protein transmembrane segment at 112–132 (WLMTFTWLVLFVVIGLSGAWW) threads the bilayer. Residues 133-337 (WQDRKAQQEE…TLNAEQSPAQ (205 aa)) lie on the Periplasmic side of the membrane. A compositionally biased stretch (polar residues) spans 144 to 167 (TTMADQSSAELSSNSEQGQSVPLN). Residues 144-235 (TTMADQSSAE…PTAATTPDGA (92 aa)) are disordered. The span at 168–207 (TSTTTDPATTSTPPASVDTTATNTQTPAVTAPAPAVDPQQ) shows a compositional bias: low complexity. Polar residues predominate over residues 208-218 (NAVVSPSQANV). Residues 219–235 (DTAATPAPTAATTPDGA) show a composition bias toward low complexity.

Belongs to the RodZ family.

The protein resides in the cell inner membrane. In terms of biological role, cytoskeletal protein that is involved in cell-shape control through regulation of the length of the long axis. This is Cytoskeleton protein RodZ from Escherichia coli (strain K12 / MC4100 / BW2952).